A 142-amino-acid chain; its full sequence is 5-hydroxymethyl-dUMP N-hydrolase (142 aa).

5-hydroxymethyl-dUMP contacts are provided by Gly7, Ile9, Arg10, Gly11, Ser78, Gly80, Glu84, and Ser108.

It belongs to the 2'-deoxynucleoside 5'-phosphate N-hydrolase 1 family. As to quaternary structure, monomer and homodimer.

The protein resides in the cytoplasm. The protein localises to the nucleus. The enzyme catalyses 5-hydroxymethyl-dUMP + H2O = 5-hydroxymethyluracil + 2-deoxy-D-ribose 5-phosphate. Its function is as follows. Part of a nucleotide salvage pathway that eliminates epigenetically modified 5-hydroxymethyl-dCMP (hmdCMP) in a two-step process entailing deamination to cytotoxic 5-hydroxymethyl-dUMP (hmdUMP), followed by its hydrolysis into 5-hydroxymethyluracil (hmU) and 2-deoxy-D-ribose 5-phosphate (deoxyribosephosphate). Catalyzes the second step in that pathway, the hydrolysis of the N-glycosidic bond in hmdUMP, degrading this cytotoxic nucleotide to avoid its genomic integration. This Tetraodon nigroviridis (Spotted green pufferfish) protein is 5-hydroxymethyl-dUMP N-hydrolase (dnph1).